The chain runs to 270 residues: uncharacterized protein (270 aa).

It to T.pallidum TP_0127, TP_0315 and TP_0618.

This is an uncharacterized protein from Treponema pallidum (strain Nichols).